Here is a 412-residue protein sequence, read N- to C-terminus: UPF0761 membrane protein LPC_2650 (412 aa).

The next 6 membrane-spanning stretches (helical) occupy residues 36 to 56 (ALAF…LAIF), 99 to 119 (LSIW…FTIE), 137 to 157 (AFLL…LSLA), 177 to 197 (ILHY…YVVV), 210 to 230 (GGLV…YYLI), and 241 to 261 (AFAT…ITLL).

This sequence belongs to the UPF0761 family.

The protein resides in the cell inner membrane. This Legionella pneumophila (strain Corby) protein is UPF0761 membrane protein LPC_2650.